The primary structure comprises 178 residues: Large ribosomal subunit protein uL6 (178 aa).

It belongs to the universal ribosomal protein uL6 family. Part of the 50S ribosomal subunit.

Its function is as follows. This protein binds to the 23S rRNA, and is important in its secondary structure. It is located near the subunit interface in the base of the L7/L12 stalk, and near the tRNA binding site of the peptidyltransferase center. The sequence is that of Large ribosomal subunit protein uL6 from Corynebacterium glutamicum (strain R).